The primary structure comprises 171 residues: Putative RING finger protein 027R (171 aa).

The RING-type zinc-finger motif lies at 121 to 163 (CAVCMTNPVWVDFVWSCKHISTCIKCLKMLSRGSNGFKCPICR).

It belongs to the IIV-6 157L family.

The polypeptide is Putative RING finger protein 027R (Aedes vexans (Inland floodwater mosquito)).